The sequence spans 116 residues: NADH-ubiquinone oxidoreductase chain 3 (116 aa).

The next 3 membrane-spanning stretches (helical) occupy residues 4–24 (FMVM…LAFW), 56–76 (FFLV…LLPS), and 87–107 (FTLL…IYEW).

Belongs to the complex I subunit 3 family.

Its subcellular location is the mitochondrion membrane. The enzyme catalyses a ubiquinone + NADH + 5 H(+)(in) = a ubiquinol + NAD(+) + 4 H(+)(out). Core subunit of the mitochondrial membrane respiratory chain NADH dehydrogenase (Complex I) that is believed to belong to the minimal assembly required for catalysis. Complex I functions in the transfer of electrons from NADH to the respiratory chain. The immediate electron acceptor for the enzyme is believed to be ubiquinone. This chain is NADH-ubiquinone oxidoreductase chain 3 (MT-ND3), found in Petromyzon marinus (Sea lamprey).